Here is a 158-residue protein sequence, read N- to C-terminus: NADH-quinone oxidoreductase subunit B (158 aa).

4 residues coordinate [4Fe-4S] cluster: Cys-37, Cys-38, Cys-102, and Cys-132.

This sequence belongs to the complex I 20 kDa subunit family. NDH-1 is composed of 14 different subunits. Subunits NuoB, C, D, E, F, and G constitute the peripheral sector of the complex. [4Fe-4S] cluster is required as a cofactor.

The protein resides in the cell inner membrane. It catalyses the reaction a quinone + NADH + 5 H(+)(in) = a quinol + NAD(+) + 4 H(+)(out). Its function is as follows. NDH-1 shuttles electrons from NADH, via FMN and iron-sulfur (Fe-S) centers, to quinones in the respiratory chain. The immediate electron acceptor for the enzyme in this species is believed to be ubiquinone. Couples the redox reaction to proton translocation (for every two electrons transferred, four hydrogen ions are translocated across the cytoplasmic membrane), and thus conserves the redox energy in a proton gradient. The polypeptide is NADH-quinone oxidoreductase subunit B (Thiobacillus denitrificans (strain ATCC 25259 / T1)).